Here is a 123-residue protein sequence, read N- to C-terminus: WAP four-disulfide core domain protein 5 (123 aa).

The signal sequence occupies residues Met-1–Gly-24. WAP domains lie at Lys-27–Arg-73 and Ile-74–Ala-121. 8 disulfides stabilise this stretch: Cys-34–Cys-62, Cys-41–Cys-66, Cys-49–Cys-61, Cys-55–Cys-70, Cys-81–Cys-109, Cys-88–Cys-113, Cys-96–Cys-108, and Cys-102–Cys-117.

The protein localises to the secreted. Its function is as follows. Putative acid-stable proteinase inhibitor. This chain is WAP four-disulfide core domain protein 5 (WFDC5), found in Callithrix jacchus (White-tufted-ear marmoset).